Reading from the N-terminus, the 176-residue chain is Large ribosomal subunit protein uL10 (176 aa).

Belongs to the universal ribosomal protein uL10 family. As to quaternary structure, part of the ribosomal stalk of the 50S ribosomal subunit. The N-terminus interacts with L11 and the large rRNA to form the base of the stalk. The C-terminus forms an elongated spine to which L12 dimers bind in a sequential fashion forming a multimeric L10(L12)X complex.

Functionally, forms part of the ribosomal stalk, playing a central role in the interaction of the ribosome with GTP-bound translation factors. This Sorangium cellulosum (strain So ce56) (Polyangium cellulosum (strain So ce56)) protein is Large ribosomal subunit protein uL10.